A 1177-amino-acid chain; its full sequence is MTDSEHAGHDREDGELEDGEIDDAGFEETQDQEAKENEKQKNEKAYRKSRKKHKKEREKKKSKRRKHEKHKHNSPSGDDSSDYSLDSDVERMQSSRKKRTSSYRDYDVPFSQHRRISGSYMTSKKSQHNKKTNSKEYAESSFYSDDYFGNYSDDNFGNYSNQEGEEDFSSQLKYYRQSQESSGSSFSKESGKKLRSKGSPPGTEYRIKSFDVSHGHLLPKKIRRKEHCGARVIKGPYVFSGMDDFQEYSKPGKKWKVMTQEFINQHTVEHKGKQICKYFLEGRCIKGDHCKFNHDAELEKKKEVCKYYLQGYCTKGENCIYMHSEFPCKFYHSGAKCYQGDKCKFSHDDLTKETRKLLDKVLNADEELVNEDERELEELRKRGITPLPKPPPGVGLLPTPSEHFPFSDPEDDFETDLSDDMKKIPSLFEIVVKPTVDLAHKIGKKPPAFYNSTSPPGPQFEESSHCPQRMYSSESSPGPGSKVPQGCESPVRHPGSPGHHPCVGPPGPPMQENPSLLPSSSEIVGPHSQAGGLVQLDTLPSMGGAYHSPGFPGHSVKVPRESHSSPASLYQQMPSEMQRSADSESMQGSAEFYDDYYPQHAAHNFQPPDNSADEMWHEEFAQQQPPIARDTAHLGSGPNSSSRMTSHCPLSASGLPPAVQRALFIPLTQRYQEDEEPAGTQPHRASSKEEDDTANWYSSSEEEEGSGVKSILRTLQKQTGTLRNQQLPPTELSVPTDPRLAKEKRKRNQVVDPRLRTVPRQDIKKPHESVPVDLRLVWDPKKLRGNGGAPGGSSARGAEFDLRHTNAGANHKSKRREDDDEDSERELREKAFLIPLDSSPGIVLQDPRSQLRQFSHIKMDIILNKPNFAKHIVWAPEDLLPVPLPKPDPVSSINLPLPPLIADQRLNRLWNTKSDHQGALSLDPTSAAKAKLSLTHREGCLEQSGDLHSSGGKLGDPRLQKNFDPRLHRLPNTESHQVTAKDSHSSRSALPLARWNPALSQPSTAAPINVASVTPPLYAPKLSSEGLPPGTSSSVLSGISLYDPRDKGSLSATELSTISSGENTESQKKSGLKNSDKNQPSPGEVTVPQNTTADMEVPVDGPVDMQTDILRSADKVQVPAVHSLPIQALTGLLRPPYSDPRQAREPGQASPTPDEETDDKPLKEVFKTFDPTASPFC.

Residues 1 to 12 (MTDSEHAGHDRE) are compositionally biased toward basic and acidic residues. 2 disordered regions span residues 1-137 (MTDS…SKEY) and 179-206 (QESSGSSFSKESGKKLRSKGSPPGTEYR). Residues 13–31 (DGELEDGEIDDAGFEETQD) show a composition bias toward acidic residues. The stretch at 27–73 (EETQDQEAKENEKQKNEKAYRKSRKKHKKEREKKKSKRRKHEKHKHN) forms a coiled coil. Basic and acidic residues predominate over residues 32–46 (QEAKENEKQKNEKAY). Residues 47–73 (RKSRKKHKKEREKKKSKRRKHEKHKHN) show a composition bias toward basic residues. A compositionally biased stretch (low complexity) spans 179–188 (QESSGSSFSK). C3H1-type zinc fingers lie at residues 271–297 (KGKQICKYFLEGRCIKGDHCKFNHDAE), 299–326 (EKKKEVCKYYLQGYCTKGENCIYMHSEF), and 327–350 (PCKFYHSGAKCYQGDKCKFSHDDL). Positions 347-383 (HDDLTKETRKLLDKVLNADEELVNEDERELEELRKRG) form a coiled coil. 8 disordered regions span residues 383 to 416 (GITPLPKPPPGVGLLPTPSEHFPFSDPEDDFETD), 446 to 587 (PPAF…ESMQ), 622 to 654 (QQQPPIARDTAHLGSGPNSSSRMTSHCPLSASG), 670 to 767 (RYQE…KKPH), 780 to 826 (PKKL…SERE), 942 to 988 (EQSG…SSRS), 1043 to 1101 (DPRD…PVDG), and 1132 to 1162 (LLRPPYSDPRQAREPGQASPTPDEETDDKPL). Low complexity predominate over residues 493–502 (HPGSPGHHPC). Polar residues-rich tracts occupy residues 512-522 (ENPSLLPSSSE) and 564-587 (SSPASLYQQMPSEMQRSADSESMQ). Over residues 713 to 728 (RTLQKQTGTLRNQQLP) the composition is skewed to polar residues. Basic and acidic residues predominate over residues 753–767 (PRLRTVPRQDIKKPH). Positions 955–967 (GDPRLQKNFDPRL) are enriched in basic and acidic residues. 2 stretches are compositionally biased toward polar residues: residues 1050–1064 (LSATELSTISSGENT) and 1077–1093 (KNQPSPGEVTVPQNTTA). Ser1150 carries the post-translational modification Phosphoserine.

The protein is Zinc finger CCCH domain-containing protein 6 (Zc3h6) of Mus musculus (Mouse).